Here is a 153-residue protein sequence, read N- to C-terminus: Arachidonate 5-lipoxygenase-activating protein (153 aa).

The Lumenal portion of the chain corresponds to 1-8 (MDQETVGN). A helical membrane pass occupies residues 9-30 (VVLLAIVTLISVVQNGFFAHKV). Residues 31 to 52 (EHESRTQNGRSFQRTGTLAFER) lie on the Cytoplasmic side of the membrane. A helical membrane pass occupies residues 53–77 (VYTANQNCVDAYPTFLAVLWSAGLL). Over 78 to 80 (CSQ) the chain is Lumenal. Residues 81–102 (VPAAFAGLMYLLVRQKYFVGYL) traverse the membrane as a helical segment. At 103 to 107 (GERTQ) the chain is on the cytoplasmic side. An intramembrane segment occupies 108-115 (STPGYIFG). A helical membrane pass occupies residues 116 to 128 (KRIILFLFLMSVA). Over 129-153 (GIFNYYLIFFFGSDFENYIKTVTTT) the chain is Lumenal.

Belongs to the MAPEG family. As to quaternary structure, homotrimer. Interacts with LTC4S and ALOX5.

It localises to the nucleus membrane. Its subcellular location is the endoplasmic reticulum membrane. In terms of biological role, required for leukotriene biosynthesis by ALOX5 (5-lipoxygenase). Anchors ALOX5 to the membrane. Binds arachidonic acid, and could play an essential role in the transfer of arachidonic acid to ALOX5. Binds to MK-886, a compound that blocks the biosynthesis of leukotrienes. This Macaca mulatta (Rhesus macaque) protein is Arachidonate 5-lipoxygenase-activating protein (ALOX5AP).